We begin with the raw amino-acid sequence, 303 residues long: Oxygen-dependent coproporphyrinogen-III oxidase (303 aa).

Substrate is bound at residue serine 93. 2 residues coordinate a divalent metal cation: histidine 97 and histidine 107. Histidine 107 (proton donor) is an active-site residue. A substrate-binding site is contributed by 109–111 (NVR). The a divalent metal cation site is built by histidine 149 and histidine 179. The segment at 244–279 (YVEFNLVFDRGTLFGLQSGGRTESILLSMPPLAQWR) is important for dimerization. Position 262–264 (262–264 (GGR)) interacts with substrate.

Belongs to the aerobic coproporphyrinogen-III oxidase family. As to quaternary structure, homodimer. The cofactor is a divalent metal cation.

Its subcellular location is the cytoplasm. The enzyme catalyses coproporphyrinogen III + O2 + 2 H(+) = protoporphyrinogen IX + 2 CO2 + 2 H2O. It participates in porphyrin-containing compound metabolism; protoporphyrin-IX biosynthesis; protoporphyrinogen-IX from coproporphyrinogen-III (O2 route): step 1/1. Functionally, involved in the heme biosynthesis. Catalyzes the aerobic oxidative decarboxylation of propionate groups of rings A and B of coproporphyrinogen-III to yield the vinyl groups in protoporphyrinogen-IX. The protein is Oxygen-dependent coproporphyrinogen-III oxidase of Bordetella parapertussis (strain 12822 / ATCC BAA-587 / NCTC 13253).